Reading from the N-terminus, the 960-residue chain is Probable glutamyl endopeptidase, chloroplastic (960 aa).

The N-terminal 62 residues, 1-62 (MMRFHKACHR…FSENPLTTVM (62 aa)), are a transit peptide targeting the chloroplast. A disordered region spans residues 78-98 (SGGAEDGGGTSNGSLSASATA). Over residues 89–98 (NGSLSASATA) the composition is skewed to polar residues. Residues Ser-780, Asp-854, and His-888 each act as charge relay system in the active site. The disordered stretch occupies residues 915–960 (TSDADTSPDQSKEGSDSADKVSTGTGGGNPEFGEHEVHSKLRRSLL). Basic and acidic residues predominate over residues 924-933 (QSKEGSDSAD).

Belongs to the peptidase S9D family.

Its subcellular location is the plastid. It is found in the chloroplast stroma. Its function is as follows. Serine-type protease active in vitro against the LHCII N-terminal. Cleaves its substrate on the carboxy-side of Glu residues. The chain is Probable glutamyl endopeptidase, chloroplastic (GEP) from Arabidopsis thaliana (Mouse-ear cress).